Reading from the N-terminus, the 192-residue chain is Elongation factor P (192 aa).

This sequence belongs to the elongation factor P family.

The protein localises to the cytoplasm. It participates in protein biosynthesis; polypeptide chain elongation. Its function is as follows. Involved in peptide bond synthesis. Stimulates efficient translation and peptide-bond synthesis on native or reconstituted 70S ribosomes in vitro. Probably functions indirectly by altering the affinity of the ribosome for aminoacyl-tRNA, thus increasing their reactivity as acceptors for peptidyl transferase. The polypeptide is Elongation factor P (Borrelia recurrentis (strain A1)).